A 296-amino-acid chain; its full sequence is D-alanine--D-alanine ligase (296 aa).

In terms of domain architecture, ATP-grasp spans 103–293 (KEILMHHRMP…FDSFVKRIIE (191 aa)). 129–180 (ISFPAAVKPSSGGSSIATFKVKSIQELKHAYEEASKYGEVMIEQWVTGKEIT) is an ATP binding site. Mg(2+) contacts are provided by Asp-247, Glu-260, and Asn-262.

This sequence belongs to the D-alanine--D-alanine ligase family. Mg(2+) is required as a cofactor. The cofactor is Mn(2+).

It localises to the cytoplasm. It carries out the reaction 2 D-alanine + ATP = D-alanyl-D-alanine + ADP + phosphate + H(+). Its pathway is cell wall biogenesis; peptidoglycan biosynthesis. Its function is as follows. Cell wall formation. The chain is D-alanine--D-alanine ligase from Francisella tularensis subsp. holarctica (strain LVS).